Here is a 368-residue protein sequence, read N- to C-terminus: Seipin-1 (368 aa).

3 helical membrane-spanning segments follow: residues 26 to 46 (WFMV…VVLS), 101 to 121 (VMVL…SLYV), and 292 to 312 (LCVW…LWCF). The interval 344–368 (MERRRRERRNQPRRRNFATTQKSYT) is disordered. Residues 346 to 359 (RRRRERRNQPRRRN) show a composition bias toward basic residues.

It belongs to the seipin family. In terms of tissue distribution, expressed in seeds and young seedlings. Not detected in leaves.

The protein resides in the endoplasmic reticulum membrane. Its function is as follows. Involved in lipid metabolism and lipid droplet (LD) morphology, number, and size. Facilitates the formation of large-sized LDs and modulates triacylglycerol accumulation. Induces probably a reorganization of the endoplasmic reticulum into LD-forming domains. The chain is Seipin-1 from Arabidopsis thaliana (Mouse-ear cress).